A 434-amino-acid chain; its full sequence is Nuclear envelope integral membrane protein 1b (434 aa).

An N-terminal signal peptide occupies residues 1–29 (MAGEVEGRGCGFSLGVLVTLLVLPLPSLC). 5 helical membrane-spanning segments follow: residues 151–171 (PRLF…DTLS), 175–195 (LFFY…ILVF), 206–226 (PFFA…QLVF), 239–259 (YLIV…YIYG), and 280–300 (LLMY…VIAF). Residues 176–287 (FFYSTGITVG…GLLLMYVSVQ (112 aa)) are a; required for its colocalization with lamins at the nuclear envelope. The Nuclear localization signal signature appears at 317 to 325 (RKIKLKRAK). The b; interaction with ran stretch occupies residues 326-395 (PGPPRLLTEE…LTPNEVSVHE (70 aa)). The interaction with banf1-a and banf1-b stretch occupies residues 326 to 434 (PGPPRLLTEE…PLYPIPRSVF (109 aa)). The tract at residues 368-375 (SRIQSPKR) is BAF-binding site (BBS); essential for interaction with banf1-a, banf1-b and ran.

This sequence belongs to the NEMP family. As to quaternary structure, interacts with banf1-a and banf1-b. Interacts with ran-gtp. Post-translationally, phosphorylated.

The protein localises to the nucleus inner membrane. It is found in the nucleus envelope. In terms of biological role, in concert with ran, required for proper eye development. May be involved in the expression of early eye marker genes. Contributes to nuclear envelope stiffness in germ cells. Required for fertility. Essential for normal erythropoiesis. Required for efficient nuclear envelope opening and enucleation during the late stages of erythroblast maturation. The polypeptide is Nuclear envelope integral membrane protein 1b (nemp1b) (Xenopus laevis (African clawed frog)).